The chain runs to 211 residues: Peptide methionine sulfoxide reductase MsrA (211 aa).

Residue Cys60 is part of the active site.

Belongs to the MsrA Met sulfoxide reductase family.

The enzyme catalyses L-methionyl-[protein] + [thioredoxin]-disulfide + H2O = L-methionyl-(S)-S-oxide-[protein] + [thioredoxin]-dithiol. It catalyses the reaction [thioredoxin]-disulfide + L-methionine + H2O = L-methionine (S)-S-oxide + [thioredoxin]-dithiol. In terms of biological role, has an important function as a repair enzyme for proteins that have been inactivated by oxidation. Catalyzes the reversible oxidation-reduction of methionine sulfoxide in proteins to methionine. This is Peptide methionine sulfoxide reductase MsrA from Methanosarcina mazei (strain ATCC BAA-159 / DSM 3647 / Goe1 / Go1 / JCM 11833 / OCM 88) (Methanosarcina frisia).